Here is a 347-residue protein sequence, read N- to C-terminus: MSLGPVMLDLEGTALTETERRLLTHPRAGGVILFTRNFESLGQLTELLREIHALRTPRLLVAVDHEGGRVQRFREGFTRLPAAARFGEQYDRNHARGRELARMAGWLMAAELRAVGVDFSFAPVLDLAHGVSGVIGDRAFHRNPEVVADLAHHYMSGMQHAGMAAVGKHFPGHGGVREDSHLALPVDRRTPADLYTDILPFERMVRFGLAGIMPAHVVYERCDPLPAGFSSYWLRGELRDRLGFEGVIFSDDLSMAGAECMGDYPDRARAALKAGCDMVLVCNHPEQAARVLDALDDEPDPVSIARLARMHGRKGMTWGELTDSDEWQKARAVINALDDSPLMELDV.

Residues aspartate 64, arginine 72, arginine 138, and 168–169 (KH) each bind substrate. Histidine 181 serves as the catalytic Proton donor/acceptor. Residue aspartate 251 is the Nucleophile of the active site.

Belongs to the glycosyl hydrolase 3 family. NagZ subfamily.

The protein resides in the cytoplasm. It carries out the reaction Hydrolysis of terminal non-reducing N-acetyl-D-hexosamine residues in N-acetyl-beta-D-hexosaminides.. It participates in cell wall biogenesis; peptidoglycan recycling. Its function is as follows. Plays a role in peptidoglycan recycling by cleaving the terminal beta-1,4-linked N-acetylglucosamine (GlcNAc) from peptide-linked peptidoglycan fragments, giving rise to free GlcNAc, anhydro-N-acetylmuramic acid and anhydro-N-acetylmuramic acid-linked peptides. The polypeptide is Beta-hexosaminidase (Thioalkalivibrio sulfidiphilus (strain HL-EbGR7)).